The following is a 459-amino-acid chain: mRNA-capping enzyme subunit alpha (459 aa).

Residue lysine 70 is the N6-GMP-lysine intermediate of the active site. The disordered stretch occupies residues 415 to 459; that stretch reads MAGGSGRPLPSQSQNATLSTSKPVHSQPPSNDKEPKYVDEDDWSD. Over residues 424 to 444 the composition is skewed to polar residues; that stretch reads PSQSQNATLSTSKPVHSQPPS.

This sequence belongs to the eukaryotic GTase family. As to quaternary structure, heterodimer. The mRNA-capping enzyme is composed of two separate chains alpha and beta, respectively a mRNA guanylyltransferase and an mRNA 5'-triphosphate monophosphatase.

The protein resides in the nucleus. It catalyses the reaction a 5'-end diphospho-ribonucleoside in mRNA + GTP + H(+) = a 5'-end (5'-triphosphoguanosine)-ribonucleoside in mRNA + diphosphate. Functionally, second step of mRNA capping. Transfer of the GMP moiety of GTP to the 5'-diphosphate terminus of RNA via a covalent enzyme-GMP reaction intermediate. In Saccharomyces cerevisiae (strain ATCC 204508 / S288c) (Baker's yeast), this protein is mRNA-capping enzyme subunit alpha (CEG1).